A 115-amino-acid polypeptide reads, in one-letter code: NADH-ubiquinone oxidoreductase chain 3 (115 aa).

Transmembrane regions (helical) follow at residues 4 to 24 (IMAM…AFWL), 55 to 75 (FFLV…LLPL), and 84 to 104 (MFLT…GLAY).

Belongs to the complex I subunit 3 family. Core subunit of respiratory chain NADH dehydrogenase (Complex I) which is composed of 45 different subunits. Interacts with TMEM186. Interacts with TMEM242.

It localises to the mitochondrion inner membrane. The enzyme catalyses a ubiquinone + NADH + 5 H(+)(in) = a ubiquinol + NAD(+) + 4 H(+)(out). Its function is as follows. Core subunit of the mitochondrial membrane respiratory chain NADH dehydrogenase (Complex I) which catalyzes electron transfer from NADH through the respiratory chain, using ubiquinone as an electron acceptor. Essential for the catalytic activity of complex I. This Phyllotis darwinii (Darwin's leaf-eared mouse) protein is NADH-ubiquinone oxidoreductase chain 3.